Consider the following 394-residue polypeptide: Elongation factor Tu (394 aa).

Positions 10–205 constitute a tr-type G domain; sequence KPHMNVGTIG…TMDNYFDLPE (196 aa). Positions 19–26 are G1; sequence GHVDHGKT. 19–26 is a GTP binding site; sequence GHVDHGKT. Threonine 26 contributes to the Mg(2+) binding site. The segment at 61–65 is G2; sequence GITIN. The G3 stretch occupies residues 82–85; sequence DCPG. Residues 82-86 and 137-140 each bind GTP; these read DCPGH and NKLD. Residues 137-140 form a G4 region; that stretch reads NKLD. Positions 173 to 175 are G5; that stretch reads SAF.

This sequence belongs to the TRAFAC class translation factor GTPase superfamily. Classic translation factor GTPase family. EF-Tu/EF-1A subfamily. In terms of assembly, monomer.

Its subcellular location is the cytoplasm. It catalyses the reaction GTP + H2O = GDP + phosphate + H(+). Its function is as follows. GTP hydrolase that promotes the GTP-dependent binding of aminoacyl-tRNA to the A-site of ribosomes during protein biosynthesis. This Borrelia duttonii (strain Ly) protein is Elongation factor Tu.